A 218-amino-acid polypeptide reads, in one-letter code: uncharacterized protein (218 aa).

This is an uncharacterized protein from Treponema pallidum (strain Nichols).